The following is a 297-amino-acid chain: Beta-glucoside kinase (297 aa).

5-11 (AFDIGGT) serves as a coordination point for ATP.

Belongs to the ROK (NagC/XylR) family. As to quaternary structure, homotetramer.

The catalysed reaction is D-cellobiose + ATP = 6-phospho-beta-D-glucosyl-(1-&gt;4)-D-glucose + ADP + H(+). With respect to regulation, is inhibited by N-ethylmaleimide in vitro, but ATP affords considerable protection against the inhibitor. Functionally, catalyzes the ATP-dependent phosphorylation of a wide variety of beta-D-glucosides, to produce 6-phospho-beta-D-glucosides including cellobiose-6'-P, gentiobiose-6'-P, cellobiitol-6-P, salicin-6-P, and arbutin-6-P. Is not able to phosphorylate alpha-D-glucosides. May have a dual role of kinase and transcriptional regulator of the cellobiose-PTS operon. This Klebsiella pneumoniae protein is Beta-glucoside kinase (bglK).